A 122-amino-acid polypeptide reads, in one-letter code: Large ribosomal subunit protein bL12 (122 aa).

It belongs to the bacterial ribosomal protein bL12 family. As to quaternary structure, homodimer. Part of the ribosomal stalk of the 50S ribosomal subunit. Forms a multimeric L10(L12)X complex, where L10 forms an elongated spine to which 2 to 4 L12 dimers bind in a sequential fashion. Binds GTP-bound translation factors.

In terms of biological role, forms part of the ribosomal stalk which helps the ribosome interact with GTP-bound translation factors. Is thus essential for accurate translation. This Mycoplasma pneumoniae (strain ATCC 29342 / M129 / Subtype 1) (Mycoplasmoides pneumoniae) protein is Large ribosomal subunit protein bL12.